The chain runs to 1259 residues: MAATGVLPFIRGVDLSGNDFKGGNFPEHVKSMTSLRWLKLNRTGLCYLPEELASLQKLEHLSVSHNSLTTLHGELSSLPNLRAVVARANNLKNSGVPDDIFQLDDLSVLDLSHNQLTEIPRDLENSRNMLVLNLSHNSIDNIPNQLFINLTDLLYLDLSDNNLDSLPPQMRRLVHLQTLILNNNPLMHAQLRQLPVMVSLQTLHLRNTQRTQNNMPTSLEGLSNLTDVDLSCNDLTRVPECLYSLVNLKRLNLSSNQISELSLCIDQWTKLETLNLSRNQLTSLPSAICKLSKLKKLYVNSNKIDFDGLPSGVGKLSNLVEFMAANNNLELVPEGLCRCGKLKKLVLNKNRLVTLPEAIHFLTELEVLDVRENPNLVMPPKPVDRTAEWYNIDFSLQNQLRLAGASPATVAAAGGGNSPRDHMARKMRLRRCKDSAHDDQAKQVLKGMSDVAQEKNKSIEENGDLKYSDLKTKRWDKNLEKPQLDYSEFFLEDVGQIPGVSVWQIENFIPIQVDEAFHGKFYEADCYIILKTFLDENGALNWQIFYWIGQDATLDKKAGAAIHAVNLRNYLGAECRTIREEMGDESEEFTVVFDHEISYIEGGTASGFYTVEDTQYPTRLYRVYGKKNIRLESVPLKASSLDPQFVFLLDTGLEIYVWRGGNATLGGTTKARLFAEKINKNERKSKAEITTLMQNQEPPEFWEVLGGQPEEIKKHVPDDFTPIRPKLYKVGLGLGYLELPQINYKLSVEHKDKLKLDVVPELRLVQGLLDTKGVYILDCWSDVFIWIGRKSPRLVRAAALKLGQEVCGMLHRPKHAVVIRNLEGTECQVFKSKFKNWDDVLKVDYTRNAESVKQEAGLSGKVKKDVEQKDQMKADLTALFLPRQPAMPLTEAEQMMEEWNEDLDGMEGFVLEGKKFARLPEEEFGHFHTQDCYVFLCRYWVPVEYEDDKEKGKEKGEEGDDEEKQPEEDFQCVVYFWQGREASNMGWLTFTFSLQKKFESLFPGKLEVVRMTQQQENLKFLSHFKRKFIIHKGKRKLKVDSVQPSLYHIRTNGSALCTRTIQIATDSSNLNSEFCFILKVPFESTDNQGIVYTWVGRAADPDEAKLAEEIMNTMFDDTYSKQVINEGEEPENFFWVGIGSQKTYDEDAEYMKYARLFRCSNEKGYFAVSEKCSDFCQDDLADDDIMLLDNGKEVYMWVGTQTSQVEIKLSLKACQVYIQHMRSKDTENPRKLRLVRKGNEPHCFTRCFHAWSAFKTAPA.

15 LRR repeats span residues 7–32 (LPFIRGVDLSGNDFKGGNFPEHVKSM), 33–55 (TSLRWLKLNRTGLCYLPEELASL), 56–78 (QKLEHLSVSHNSLTTLHGELSSL), 80–103 (NLRAVVARANNLKNSGVPDDIFQL), 104–126 (DDLSVLDLSHNQLTEIPRDLENS), 128–149 (NMLVLNLSHNSIDNIPNQLFIN), 150–173 (LTDLLYLDLSDNNLDSLPPQMRRL), 176–201 (LQTLILNNNPLMHAQLRQLPVMVSLQ), 222–245 (LSNLTDVDLSCNDLTRVPECLYSL), 247–268 (NLKRLNLSSNQISELSLCIDQW), 269–291 (TKLETLNLSRNQLTSLPSAICKL), 293–316 (KLKKLYVNSNKIDFDGLPSGVGKL), 317–339 (SNLVEFMAANNNLELVPEGLCRC), 340–363 (GKLKKLVLNKNRLVTLPEAIHFLT), and 365–385 (LEVLDVRENPNLVMPPKPVDR). Gelsolin-like repeat units lie at residues 509–589 (IPIQ…SEEF), 628–702 (NIRL…PEFW), 757–830 (DVVP…CQVF), and 1170–1225 (EKCS…RSKD).

In terms of tissue distribution, expressed in ventricular cardiomyocytes, where it particularly localizes to intercalated disks and costamere-like structures (at protein level).

It localises to the nucleus. It is found in the cytoplasm. The protein resides in the cytoskeleton. Its subcellular location is the microtubule organizing center. The protein localises to the centrosome. It localises to the cell junction. It is found in the focal adhesion. In terms of biological role, is a regulator of actin polymerization, required for proper myofibril organization and the assembly of cardiomyocyte cell adhesion complexes. Is a regulator of the length of sarcomeric thin filaments. Regulates cytoskeletal rearrangements involved in cytokinesis and cell migration, by inhibiting Rac1-dependent paxillin phosphorylation. May play a role as coactivator in transcriptional activation by hormone-activated nuclear receptors (NR) and acts in cooperation with NCOA2 and CARM1. Involved in estrogen hormone signaling. The protein is Protein flightless-1 homolog of Danio rerio (Zebrafish).